The following is a 135-amino-acid chain: UPF0225 protein CV_3559 (135 aa).

It belongs to the UPF0225 family.

In Chromobacterium violaceum (strain ATCC 12472 / DSM 30191 / JCM 1249 / CCUG 213 / NBRC 12614 / NCIMB 9131 / NCTC 9757 / MK), this protein is UPF0225 protein CV_3559.